The primary structure comprises 207 residues: Vexin (207 aa).

The disordered stretch occupies residues 56-100 (ELLPHRGDRRDPGDRRRFGRLQTARPPTAHPAKASARPVGISEPK). A compositionally biased stretch (basic and acidic residues) spans 58 to 71 (LPHRGDRRDPGDRR).

The protein belongs to the vexin family.

The protein resides in the cell membrane. It localises to the nucleus. Required for neurogenesis in the neural plate and retina. Strongly cooperates with neural bHLH factors to promote neurogenesis. This Homo sapiens (Human) protein is Vexin.